The chain runs to 149 residues: Large ribosomal subunit protein uL13 (149 aa).

The protein belongs to the universal ribosomal protein uL13 family. In terms of assembly, part of the 50S ribosomal subunit.

Its function is as follows. This protein is one of the early assembly proteins of the 50S ribosomal subunit, although it is not seen to bind rRNA by itself. It is important during the early stages of 50S assembly. This is Large ribosomal subunit protein uL13 from Saccharolobus solfataricus (strain ATCC 35092 / DSM 1617 / JCM 11322 / P2) (Sulfolobus solfataricus).